A 407-amino-acid polypeptide reads, in one-letter code: GTPase Obg (407 aa).

Positions 1–159 (MKFVDEVSIR…RDLKLELKVL (159 aa)) constitute an Obg domain. The segment at 127 to 149 (NTRFKSSTNRAPRQTTPGKPGDQ) is disordered. Positions 129–143 (RFKSSTNRAPRQTTP) are enriched in polar residues. The OBG-type G domain occupies 160–333 (ADVGLLGLPN…LTRDIMRYLE (174 aa)). Residues 166–173 (GLPNAGKS), 191–195 (FTTLV), 213–216 (DIPG), 283–286 (NKCD), and 314–316 (SAI) each bind GTP. Mg(2+) is bound by residues serine 173 and threonine 193. The disordered stretch occupies residues 376-407 (SGVKSVHDIGDDDWDEEDVDDEDGPEIIYVRD). The span at 385–400 (GDDDWDEEDVDDEDGP) shows a compositional bias: acidic residues.

Belongs to the TRAFAC class OBG-HflX-like GTPase superfamily. OBG GTPase family. In terms of assembly, monomer. Requires Mg(2+) as cofactor.

The protein localises to the cytoplasm. In terms of biological role, an essential GTPase which binds GTP, GDP and possibly (p)ppGpp with moderate affinity, with high nucleotide exchange rates and a fairly low GTP hydrolysis rate. Plays a role in control of the cell cycle, stress response, ribosome biogenesis and in those bacteria that undergo differentiation, in morphogenesis control. The protein is GTPase Obg of Pseudomonas savastanoi pv. phaseolicola (strain 1448A / Race 6) (Pseudomonas syringae pv. phaseolicola (strain 1448A / Race 6)).